The following is a 323-amino-acid chain: RNA polymerase II holoenzyme cyclin-like subunit (323 aa).

A Cyclin N-terminal domain is found at 45 to 176 (DSKQNGIEQS…LLEELESYLI (132 aa)).

This sequence belongs to the cyclin family. Cyclin C subfamily. Component of the SRB8-11 complex which consists of SRB8, SSN2/SRB9, SSN3/SRB10 and SSN8/SRB11. The SRB8-11 complex associates with the Mediator complex. The SSN3/SRB10 and SSN8/SRB11 kinase-cyclin pair also associate with the RNA polymerase II holoenzyme. Interacts with ASK10.

It localises to the nucleus. Its function is as follows. Component of the SRB8-11 complex. The SRB8-11 complex is a regulatory module of the Mediator complex which is itself involved in regulation of basal and activated RNA polymerase II-dependent transcription. The SRB8-11 complex may be involved in the transcriptional repression of a subset of genes regulated by Mediator. It may inhibit the association of the Mediator complex with RNA polymerase II to form the holoenzyme complex. The SRB8-11 complex phosphorylates the C-terminal domain (CTD) of the largest subunit of RNA polymerase II RPB1 at serines 2 and 5. The SSN3/SRB10 and SSN8/SRB11 kinase-cyclin pair may also positively and negatively regulate numerous transcriptional activators in response to changes in nutritional and physiological conditions. The chain is RNA polymerase II holoenzyme cyclin-like subunit (SSN8) from Saccharomyces cerevisiae (strain ATCC 204508 / S288c) (Baker's yeast).